The primary structure comprises 335 residues: MKISRSLSTVEVHTGGEAFRIVTSGLPRLPGDTIVRRRAWLKEHADEIRRALMFEPRGHADMYGGYLTEPVSPNADFGVIFVHNEGYSDHCGHGVIALSTAAVELGWVQRTVPETRVGIDAPCGFIEAFVQWDGEHAGPVRFVNVPSFIWQRDVAVDTPSFGTVTGDIAYGGAFYFYVDGAPFDLPVRESAVERLIRFGAEVKAAANAKYPVEHPEIPEINHIYGTIIANAPRDPRSTQANCCVFADREVDRSPTGSGTGGRVAQLYQRGLLAAGDTLVNESIVGTVFKGRVLRETTVGGMPAVIPEVEGSAHICGFANWIVDERDPLTYGFLVR.

Cys-91 functions as the Proton acceptor in the catalytic mechanism. Substrate contacts are provided by residues 92-93 (GH), Asp-251, and 256-257 (GS).

It belongs to the proline racemase family.

The enzyme catalyses trans-3-hydroxy-L-proline = cis-3-hydroxy-D-proline. It catalyses the reaction trans-4-hydroxy-L-proline = cis-4-hydroxy-D-proline. Functionally, catalyzes the epimerization of trans-3-hydroxy-L-proline (t3LHyp) to cis-3-hydroxy-D-proline (c3DHyp) in vitro. Can also catalyze the epimerization of trans-4-hydroxy-L-proline (t3LHyp) to cis-4-hydroxy-D-proline (c4DHyp), albeit with 3.6-fold lower efficiency. Displays no proline racemase activity. The chain is 3-hydroxyproline 2-epimerase from Burkholderia multivorans (strain ATCC 17616 / 249).